A 538-amino-acid polypeptide reads, in one-letter code: MFS-type transporter tndD (538 aa).

The disordered stretch occupies residues 1 to 42 (MSLSGSDSHLAVSPTLAEDMNSSDTSAGLAETPPADEEKRSI). 2 N-linked (GlcNAc...) asparagine glycosylation sites follow: N21 and N71. 11 helical membrane-spanning segments follow: residues 81 to 101 (VGIV…FAPG), 115 to 135 (LLAG…PLIL), 153 to 173 (ICFT…MLIA), 203 to 223 (GGVI…GPVA), 235 to 255 (WVFW…FLFL), 309 to 329 (PIVA…YLMF), 348 to 368 (GLTF…IGAV), 394 to 414 (LPPL…YGWS), 422 to 442 (IVPI…FMCI), 444 to 464 (SYLV…NTVV), and 485 to 505 (LGWG…IPWA).

This sequence belongs to the major facilitator superfamily.

It is found in the membrane. In terms of biological role, MFS-type transporter; part of the gene cluster that mediates the biosynthesis of talaronoid C, a fusicoccane diterpenoid with an unprecedented tricyclic 5/8/6 ring system. This chain is MFS-type transporter tndD, found in Aspergillus flavipes.